A 213-amino-acid chain; its full sequence is CASP-like protein UU2 (213 aa).

The disordered stretch occupies residues 1-26 (MEDPKGAWQSDVFDNGRDFKPHDKAP). Over 1 to 53 (MEDPKGAWQSDVFDNGRDFKPHDKAPANVTAGTTPPMYNVGAGGSEGNSKALS) the chain is Cytoplasmic. The span at 14–25 (DNGRDFKPHDKA) shows a compositional bias: basic and acidic residues. The chain crosses the membrane as a helical span at residues 54-74 (IISIVLRCLSIMFNVVSLGVI). The Extracellular portion of the chain corresponds to 75–96 (ASNQGKSYFVVWRTLNSSNMQY). The N-linked (GlcNAc...) asparagine glycan is linked to N90. The chain crosses the membrane as a helical span at residues 97-117 (LFAINVIVLVYCVVQLILSII). Residues 118–137 (NLVQGKMVLSGPTQPASTIT) are Cytoplasmic-facing. A helical transmembrane segment spans residues 138–158 (YICDQGLTYMLMAGFGAGVAL). Residues 159–184 (QASVDKGESGMLDCSGANEFCGKNKA) lie on the Extracellular side of the membrane. The helical transmembrane segment at 185–205 (SAALSFLGFVCIALSANLNYL) threads the bilayer. Residues 206–213 (RLYFMAAK) are Cytoplasmic-facing.

It belongs to the Casparian strip membrane proteins (CASP) family. In terms of assembly, homodimer and heterodimers.

Its subcellular location is the cell membrane. This Physcomitrium patens (Spreading-leaved earth moss) protein is CASP-like protein UU2.